Consider the following 635-residue polypeptide: Two-component response regulator ARR18 (635 aa).

Residues 19–133 (RVLAVDDNPT…ELQNIWHHVV (115 aa)) form the Response regulatory domain. At D70 the chain carries 4-aspartylphosphate. Disordered stretches follow at residues 144-196 (LPPS…KKPR) and 323-342 (IQQGHHQNSSNSANPFGTYH). Positions 166–186 (SGDEDDSDREEDDGEGSEQDG) are enriched in acidic residues. Residues 193-196 (KKPR) carry the Nuclear localization signal motif. Residues 196–246 (RVVWSQELHQKFVSAVQQLGLDKAVPKKILDLMSIEGLTRENVASHLQKYR) constitute a DNA-binding region (myb-like GARP).

The protein belongs to the ARR family. Type-B subfamily. In terms of assembly, binds the target DNA as a monomer. Post-translationally, two-component system major event consists of a His-to-Asp phosphorelay between a sensor histidine kinase (HK) and a response regulator (RR). In plants, the His-to-Asp phosphorelay involves an additional intermediate named Histidine-containing phosphotransfer protein (HPt). This multistep phosphorelay consists of a His-Asp-His-Asp sequential transfer of a phosphate group between first a His and an Asp of the HK protein, followed by the transfer to a conserved His of the HPt protein and finally the transfer to an Asp in the receiver domain of the RR protein. As to expression, predominantly expressed in young leaf tissue developing anthers, and siliques.

It localises to the nucleus. Its function is as follows. Transcriptional activator that binds specifically to the DNA sequence 5'-[AG]GATT-3'. Functions as a response regulator involved in His-to-Asp phosphorelay signal transduction system. Phosphorylation of the Asp residue in the receiver domain activates the ability of the protein to promote the transcription of target genes. Could directly activate some type-A response regulators in response to cytokinins. This chain is Two-component response regulator ARR18 (ARR18), found in Arabidopsis thaliana (Mouse-ear cress).